The sequence spans 224 residues: LexA repressor (224 aa).

The H-T-H motif DNA-binding region spans 31–51 (RAEIANTLGFKSANAAEEHLQ). Active-site for autocatalytic cleavage activity residues include Ser-142 and Lys-179.

This sequence belongs to the peptidase S24 family. In terms of assembly, homodimer.

The catalysed reaction is Hydrolysis of Ala-|-Gly bond in repressor LexA.. Functionally, represses a number of genes involved in the response to DNA damage (SOS response), including recA and lexA. In the presence of single-stranded DNA, RecA interacts with LexA causing an autocatalytic cleavage which disrupts the DNA-binding part of LexA, leading to derepression of the SOS regulon and eventually DNA repair. In Delftia acidovorans (strain DSM 14801 / SPH-1), this protein is LexA repressor.